A 957-amino-acid polypeptide reads, in one-letter code: Glycine dehydrogenase (decarboxylating) (957 aa).

At K708 the chain carries N6-(pyridoxal phosphate)lysine.

The protein belongs to the GcvP family. The glycine cleavage system is composed of four proteins: P, T, L and H. Requires pyridoxal 5'-phosphate as cofactor.

The enzyme catalyses N(6)-[(R)-lipoyl]-L-lysyl-[glycine-cleavage complex H protein] + glycine + H(+) = N(6)-[(R)-S(8)-aminomethyldihydrolipoyl]-L-lysyl-[glycine-cleavage complex H protein] + CO2. In terms of biological role, the glycine cleavage system catalyzes the degradation of glycine. The P protein binds the alpha-amino group of glycine through its pyridoxal phosphate cofactor; CO(2) is released and the remaining methylamine moiety is then transferred to the lipoamide cofactor of the H protein. The protein is Glycine dehydrogenase (decarboxylating) of Klebsiella pneumoniae subsp. pneumoniae (strain ATCC 700721 / MGH 78578).